We begin with the raw amino-acid sequence, 134 residues long: Ribosome-binding factor A (134 aa).

It belongs to the RbfA family. In terms of assembly, monomer. Binds 30S ribosomal subunits, but not 50S ribosomal subunits or 70S ribosomes.

It localises to the cytoplasm. Functionally, one of several proteins that assist in the late maturation steps of the functional core of the 30S ribosomal subunit. Associates with free 30S ribosomal subunits (but not with 30S subunits that are part of 70S ribosomes or polysomes). Required for efficient processing of 16S rRNA. May interact with the 5'-terminal helix region of 16S rRNA. In Tolumonas auensis (strain DSM 9187 / NBRC 110442 / TA 4), this protein is Ribosome-binding factor A.